Here is a 312-residue protein sequence, read N- to C-terminus: Porphobilinogen deaminase (312 aa).

Residue C241 is modified to S-(dipyrrolylmethanemethyl)cysteine.

Belongs to the HMBS family. In terms of assembly, monomer. Dipyrromethane is required as a cofactor.

It carries out the reaction 4 porphobilinogen + H2O = hydroxymethylbilane + 4 NH4(+). The protein operates within porphyrin-containing compound metabolism; protoporphyrin-IX biosynthesis; coproporphyrinogen-III from 5-aminolevulinate: step 2/4. It participates in porphyrin-containing compound metabolism; chlorophyll biosynthesis. Functionally, tetrapolymerization of the monopyrrole PBG into the hydroxymethylbilane pre-uroporphyrinogen in several discrete steps. The polypeptide is Porphobilinogen deaminase (Prosthecochloris aestuarii (strain DSM 271 / SK 413)).